The primary structure comprises 104 residues: Protein MHF2 homolog (104 aa).

It belongs to the CENP-X/MHF2 family.

The protein resides in the nucleus. Functionally, acts in the same pathway as FANCM to restrain class II meiotic crossing over (CO), and acts with FANCM during meiosis to repair interstrand cross-links (ICLs). This is Protein MHF2 homolog from Arabidopsis thaliana (Mouse-ear cress).